Consider the following 478-residue polypeptide: Antiviral innate immune response effector IFIT1 (478 aa).

TPR repeat units lie at residues 52-85 (VGIH…MQEE), 95-128 (LVTW…CKKL), 141-174 (IDCE…DPEN), 183-216 (ISAY…NPDN), 218-249 (YIKV…NMSS), and 251-284 (TYVF…TPTS). An mRNA-binding site is contributed by Trp-147. Gly-190 is a binding site for RNA. RNA contacts are provided by Lys-259, His-289, Gln-290, and Lys-336. TPR repeat units lie at residues 305 to 339 (ATKG…KPTF), 340 to 373 (EVAH…KPVV), 378 to 412 (QDIH…EQAS), and 437 to 470 (LESL…AADF).

The protein belongs to the IFIT family. Component of an interferon-dependent multiprotein complex, at least composed of IFIT1, IFIT2 and IFIT3. Interacts (via TPR repeats 1-4) with RPL15. Interacts with STING1/MITA; could disrupt STING1 interaction with MAVS or TBK1, acting as a negative-feedback regulator of virus-triggered signaling. Interacts with EIF3E; this could be an alternative way to inhibit translation. Phosphorylated. In terms of processing, ISGylated.

The protein resides in the cytoplasm. Plays a key role in the innate immune response as part of an interferon-dependent multiprotein complex, recognizing and sequestering viral RNAs that lack host-specific 2'-O-methylation at their 5' cap. By distinguishing these RNAs from host mRNAs, inhibits their translation by competing with the translation initiation factor eIF4E. Could also prevent viral replication through its interaction with DNA replication origin-binding protein E1 of several viruses. Causes the translocation of E1 from the nucleus to the cytoplasm and can also inhibit its helicase activity in vitro. Exhibits antiviral activity against many viruses from the Flaviviridae (West Nile virus, Dengue virus, hepatitis C virus), Coronaviridae (human 229E coronavirus, SARS-CoV-2 and SARS-CoV), Poxviridae (vaccinia virus) and Togaviridae (Sindbis virus) families. The polypeptide is Antiviral innate immune response effector IFIT1 (Homo sapiens (Human)).